Consider the following 90-residue polypeptide: Actobindin-B/C (90 aa).

2 consecutive WH2 domains span residues 4–21 and 40–57; these read TANPLLAEINKGTDLKHA and DHSSLLGEVEKGAQLKHV. The tract at residues 57–90 is disordered; that stretch reads VETQDRSAPVTEGATVKSNNHSALLGEIKSKAQE.

Monomer.

Is able to bind two actin monomers at high concentrations of G-actin. Inhibits actin polymerization by sequestering G-actin and stabilizing actin dimers. This Dictyostelium discoideum (Social amoeba) protein is Actobindin-B/C (abnB).